The sequence spans 608 residues: Elongation factor 4 (608 aa).

The tr-type G domain maps to 11–193; sequence DHIRNFSIVA…AIVNRLPPPK (183 aa). Residues 23–28 and 140–143 contribute to the GTP site; these read DHGKST and NKID.

The protein belongs to the TRAFAC class translation factor GTPase superfamily. Classic translation factor GTPase family. LepA subfamily.

It localises to the cell inner membrane. The catalysed reaction is GTP + H2O = GDP + phosphate + H(+). Required for accurate and efficient protein synthesis under certain stress conditions. May act as a fidelity factor of the translation reaction, by catalyzing a one-codon backward translocation of tRNAs on improperly translocated ribosomes. Back-translocation proceeds from a post-translocation (POST) complex to a pre-translocation (PRE) complex, thus giving elongation factor G a second chance to translocate the tRNAs correctly. Binds to ribosomes in a GTP-dependent manner. This Agrobacterium fabrum (strain C58 / ATCC 33970) (Agrobacterium tumefaciens (strain C58)) protein is Elongation factor 4.